A 94-amino-acid polypeptide reads, in one-letter code: ESAT-6-like protein EsxO (94 aa).

The protein belongs to the WXG100 family. ESAT-6 subfamily. In terms of assembly, forms a complex with EsxP.

It localises to the secreted. The chain is ESAT-6-like protein EsxO from Mycobacterium tuberculosis (strain CDC 1551 / Oshkosh).